Here is a 140-residue protein sequence, read N- to C-terminus: Aspartate 1-decarboxylase (140 aa).

S25 (schiff-base intermediate with substrate; via pyruvic acid) is an active-site residue. The residue at position 25 (S25) is a Pyruvic acid (Ser). A substrate-binding site is contributed by T57. Y58 functions as the Proton donor in the catalytic mechanism. 73-75 (GAA) serves as a coordination point for substrate.

This sequence belongs to the PanD family. As to quaternary structure, heterooctamer of four alpha and four beta subunits. Pyruvate is required as a cofactor. Post-translationally, is synthesized initially as an inactive proenzyme, which is activated by self-cleavage at a specific serine bond to produce a beta-subunit with a hydroxyl group at its C-terminus and an alpha-subunit with a pyruvoyl group at its N-terminus.

Its subcellular location is the cytoplasm. It carries out the reaction L-aspartate + H(+) = beta-alanine + CO2. It functions in the pathway cofactor biosynthesis; (R)-pantothenate biosynthesis; beta-alanine from L-aspartate: step 1/1. In terms of biological role, catalyzes the pyruvoyl-dependent decarboxylation of aspartate to produce beta-alanine. The polypeptide is Aspartate 1-decarboxylase (Persephonella marina (strain DSM 14350 / EX-H1)).